The primary structure comprises 186 residues: Putative glutathione-dependent formaldehyde-activating enzyme (186 aa).

Residues 20–166 (FSGGKLRCKC…FKSIGLETYD (147 aa)) enclose the CENP-V/GFA domain. The Zn(2+) site is built by cysteine 27, cysteine 29, cysteine 48, cysteine 50, cysteine 53, cysteine 95, and cysteine 98.

The protein belongs to the Gfa family. Requires Zn(2+) as cofactor.

The enzyme catalyses S-(hydroxymethyl)glutathione = glutathione + formaldehyde. It participates in one-carbon metabolism; formaldehyde degradation; formate from formaldehyde (glutathione route): step 1/3. Its function is as follows. Catalyzes the condensation of formaldehyde and glutathione to S-hydroxymethylglutathione. The sequence is that of Putative glutathione-dependent formaldehyde-activating enzyme from Fusarium vanettenii (strain ATCC MYA-4622 / CBS 123669 / FGSC 9596 / NRRL 45880 / 77-13-4) (Fusarium solani subsp. pisi).